A 67-amino-acid chain; its full sequence is MPKMKTKSSAKKRFRVRPGGTVKRGQAFKRHILTKMTTRNKRHLRGTVAVHETNMGSMAQMLPGAGL.

The span at 1–16 (MPKMKTKSSAKKRFRV) shows a compositional bias: basic residues. Residues 1–24 (MPKMKTKSSAKKRFRVRPGGTVKR) form a disordered region.

Belongs to the bacterial ribosomal protein bL35 family.

This is Large ribosomal subunit protein bL35 from Verminephrobacter eiseniae (strain EF01-2).